The chain runs to 200 residues: Recombination protein RecR (200 aa).

Residues 58–75 (CPDCFCLKTSKTSSCDFC) form a C4-type zinc finger. The region spanning 82–177 (SFLCIVATPK…KISRLALGMP (96 aa)) is the Toprim domain.

It belongs to the RecR family.

May play a role in DNA repair. It seems to be involved in an RecBC-independent recombinational process of DNA repair. It may act with RecF and RecO. The polypeptide is Recombination protein RecR (Chlamydia muridarum (strain MoPn / Nigg)).